Reading from the N-terminus, the 423-residue chain is RNA polymerase sigma factor SigA (423 aa).

Residues methionine 1–serine 76 are disordered. A compositionally biased stretch (acidic residues) spans valine 21 to leucine 70. The interval serine 78–isoleucine 113 is sigma-70 factor domain-1. Positions leucine 187–threonine 257 are sigma-70 factor domain-2. An Interaction with polymerase core subunit RpoC motif is present at residues aspartate 211 to glutamine 214. The sigma-70 factor domain-3 stretch occupies residues glutamate 266–alanine 344. The tract at residues alanine 357–lysine 409 is sigma-70 factor domain-4. The segment at residues leucine 383–asparagine 402 is a DNA-binding region (H-T-H motif).

It belongs to the sigma-70 factor family. RpoD/SigA subfamily. In terms of assembly, interacts transiently with the RNA polymerase catalytic core formed by RpoA, RpoB, RpoC and RpoZ (2 alpha, 1 beta, 1 beta' and 1 omega subunit) to form the RNA polymerase holoenzyme that can initiate transcription.

The protein resides in the cytoplasm. Its function is as follows. Sigma factors are initiation factors that promote the attachment of RNA polymerase to specific initiation sites and are then released. This sigma factor is the primary sigma factor during exponential growth. This is RNA polymerase sigma factor SigA from Thermus thermophilus (strain ATCC BAA-163 / DSM 7039 / HB27).